The sequence spans 197 residues: 3-isopropylmalate dehydratase small subunit (197 aa).

The protein belongs to the LeuD family. LeuD type 1 subfamily. Heterodimer of LeuC and LeuD.

The enzyme catalyses (2R,3S)-3-isopropylmalate = (2S)-2-isopropylmalate. The protein operates within amino-acid biosynthesis; L-leucine biosynthesis; L-leucine from 3-methyl-2-oxobutanoate: step 2/4. In terms of biological role, catalyzes the isomerization between 2-isopropylmalate and 3-isopropylmalate, via the formation of 2-isopropylmaleate. In Geobacillus kaustophilus (strain HTA426), this protein is 3-isopropylmalate dehydratase small subunit.